We begin with the raw amino-acid sequence, 354 residues long: 5,10-methenyltetrahydromethanopterin hydrogenase (354 aa).

It belongs to the HMD family.

The enzyme catalyses 5,10-methenyl-5,6,7,8-tetrahydromethanopterin + H2 = 5,10-methylenetetrahydromethanopterin + H(+). It participates in one-carbon metabolism; methanogenesis from CO(2); 5,10-methylene-5,6,7,8-tetrahydromethanopterin from 5,10-methenyl-5,6,7,8-tetrahydromethanopterin (hydrogen route): step 1/1. Its function is as follows. Catalyzes the reversible reduction of methenyl-H(4)MPT(+) to methylene-H(4)MPT. In Methanococcus vannielii (strain ATCC 35089 / DSM 1224 / JCM 13029 / OCM 148 / SB), this protein is 5,10-methenyltetrahydromethanopterin hydrogenase.